Here is a 473-residue protein sequence, read N- to C-terminus: H(+)/Cl(-) exchange transporter ClcA (473 aa).

The Cytoplasmic segment spans residues 1-32 (MKTDTSTFLAQQIVRLRRRDQIRRLMQRDKTP). Residues 33–69 (LAILFMAAVVGTLTGLVGVAFEKTVSWVQNMRIGALV) form a helical membrane-spanning segment. Residues 70–76 (QVADHAF) lie on the Periplasmic side of the membrane. The chain crosses the membrane as a helical span at residues 77–100 (LLWPLAFILSALLAMVGYFLVRKF). Positions 106–110 (GSGIP) match the Selectivity filter part_1 motif. Chloride is bound at residue serine 107. Residues 109–116 (IPEIEGAL) constitute an intramembrane region (helical). Residues 117-123 (EELRPVR) are Cytoplasmic-facing. Helical transmembrane passes span 124 to 141 (WWRV…TLGA) and 148 to 166 (EGPT…LDVF). Residues 146–150 (GREGP) carry the Selectivity filter part_2 motif. Residues 167–176 (RMRSAEARHT) lie on the Cytoplasmic side of the membrane. 2 consecutive intramembrane regions (helical) follow at residues 177–189 (LLAT…LSAA) and 193–201 (PLAGILFII). Residues 202-214 (EEMRPQFRYNLIS) are Cytoplasmic-facing. Residues 215–232 (IKAVFTGVIMSSIVFRIF) form a helical membrane-spanning segment. At 233 to 252 (NGEAPIIEVGKLSDAPVNTL) the chain is on the periplasmic side. Residues 253–281 (WLYLILGIIFGCVGPVFNSLVLRTQDMFQ) traverse the membrane as a helical segment. Residues 282 to 287 (RFHGGE) lie on the Cytoplasmic side of the membrane. The chain crosses the membrane as a helical span at residues 288 to 309 (IKKWVLMGGAIGGLCGILGLIE). The Periplasmic portion of the chain corresponds to 310 to 329 (PAAAGGGFNLIPIAAAGNFS). The next 2 helical transmembrane spans lie at 330-349 (VGLL…LCFS) and 355-376 (GIFA…MAAA). Positions 355–359 (GIFAP) match the Selectivity filter part_3 motif. 2 residues coordinate chloride: isoleucine 356 and phenylalanine 357. The Periplasmic portion of the chain corresponds to 377–386 (VLFPQYHLEA). Residues 387–401 (GTFAIAGMGALMAAS) constitute an intramembrane region (helical). Residues 402 to 404 (VRA) constitute an intramembrane region (note=Loop between two helices). Residues 405 to 416 (PLTGIVLVLEMT) constitute an intramembrane region (helical). An intramembrane region (note=Loop between two helices) is located at residues 417–421 (DNYQL). A helical membrane pass occupies residues 422–438 (ILPMIITCLGATLLAQF). Over 439–473 (LGGKPLYSTILARTLAKQDAEQAAKNQNAPAGENT) the chain is Cytoplasmic. Tyrosine 445 lines the chloride pocket.

The protein belongs to the chloride channel (TC 2.A.49) family. ClcA subfamily. In terms of assembly, homodimer.

The protein resides in the cell inner membrane. The enzyme catalyses 2 chloride(in) + H(+)(out) = 2 chloride(out) + H(+)(in). Proton-coupled chloride transporter. Functions as antiport system and exchanges two chloride ions for 1 proton. Probably acts as an electrical shunt for an outwardly-directed proton pump that is linked to amino acid decarboxylation, as part of the extreme acid resistance (XAR) response. The chain is H(+)/Cl(-) exchange transporter ClcA from Salmonella typhi.